The following is a 949-amino-acid chain: MSEYKDTLNLPETGFPMRGDLAKREPEMLQRWYQEDLYGAIRQAKKGKKSFVLHDGPPYANGDIHIGHALNKILKDVIIKSKTLSGFDAPYIPGWDCHGLPIELMVEKKVGKPGQKVTAAEFREKCREYAAGQVEGQKESFKRLGILGEWDKPYRTMDFVTEANIIRALGKIADNGHLLKGFKPVHWCTDCGSALAEAEVEYKNKVSPSIDVRFKAADEAAVLAKFGLAAGHEGKGDVSIVIWTTTPWTLPANRAVCLRADLEYVLIQVEGEQPERIIVASELAKSVMDRAGIEHFHNLGFATGADLELVQFQHPFYSFTVPAILGDHVTTDSGTGVVHTAPGHGQEDFAVGQQYGLEVANPVGSNGVYLPDTELFAGQHVFKANDSVLEVLKEKGALLHHHAYEHSYPHCWRHKTPIIFRATPQWFVSMEQAGLREQALTAIKGVHWMPDWGQSRIEGMVAGRPEWCISRQRTWGVPIALFVHKETAELHPNSADLIEKVAQLVEQKGIQAWWDLDTAELLGAEDAANYEKVLDTLDVWFDSGVTHSAVVDARQEFNGAEADMYLEGSDQHRGWFQSSLISSVAMKGKAPYKEVLTHGFVVDGQGRKMSKSIGNVVAPQDVTNKLGADILRLWVASTDYTGEVAVSDEILKRSADAYRRIRNTARFFLANLNGFNPTTDIIPVEDMVALDRWAVGRALAAQQEIIQAYQDYNLHAVVQRLMNFCSIEMGSFYLDVIKDRQYTAKRGGHAQRSCQTALFFIVEALVRWMAPIMSFTADEIWNAMPAQQADGSARDKFVFTTEWFDGLFGLAEGEELNNAFWNDIQKVRGSVNKLLENARNEKLIGGSLQAELVLFADDSLASKLAKLGDELRFVLLTSKAVVKPLAEKSEAAQATDIDGLFVQVNKTEAEKCDRCWHHTPDVGTIAGHTTICGRCVSNVEGEGEVRKFA.

The 'HIGH' region signature appears at 58-68 (PYANGDIHIGH). Glu567 lines the L-isoleucyl-5'-AMP pocket. A 'KMSKS' region motif is present at residues 608–612 (KMSKS). Lys611 is an ATP binding site. Cys912, Cys915, Cys932, and Cys935 together coordinate Zn(2+).

It belongs to the class-I aminoacyl-tRNA synthetase family. IleS type 1 subfamily. Monomer. Zn(2+) serves as cofactor.

It localises to the cytoplasm. It catalyses the reaction tRNA(Ile) + L-isoleucine + ATP = L-isoleucyl-tRNA(Ile) + AMP + diphosphate. Catalyzes the attachment of isoleucine to tRNA(Ile). As IleRS can inadvertently accommodate and process structurally similar amino acids such as valine, to avoid such errors it has two additional distinct tRNA(Ile)-dependent editing activities. One activity is designated as 'pretransfer' editing and involves the hydrolysis of activated Val-AMP. The other activity is designated 'posttransfer' editing and involves deacylation of mischarged Val-tRNA(Ile). The chain is Isoleucine--tRNA ligase from Vibrio cholerae serotype O1 (strain ATCC 39315 / El Tor Inaba N16961).